The following is a 353-amino-acid chain: Histidinol-phosphate aminotransferase (353 aa).

N6-(pyridoxal phosphate)lysine is present on K211.

It belongs to the class-II pyridoxal-phosphate-dependent aminotransferase family. Histidinol-phosphate aminotransferase subfamily. In terms of assembly, homodimer. It depends on pyridoxal 5'-phosphate as a cofactor.

The enzyme catalyses L-histidinol phosphate + 2-oxoglutarate = 3-(imidazol-4-yl)-2-oxopropyl phosphate + L-glutamate. The protein operates within amino-acid biosynthesis; L-histidine biosynthesis; L-histidine from 5-phospho-alpha-D-ribose 1-diphosphate: step 7/9. The chain is Histidinol-phosphate aminotransferase from Klebsiella pneumoniae subsp. pneumoniae (strain ATCC 700721 / MGH 78578).